The following is a 93-amino-acid chain: Small ribosomal subunit protein uS19c (93 aa).

The protein belongs to the universal ribosomal protein uS19 family.

The protein resides in the plastid. It is found in the chloroplast. Its function is as follows. Protein S19 forms a complex with S13 that binds strongly to the 16S ribosomal RNA. In Zygnema circumcarinatum (Green alga), this protein is Small ribosomal subunit protein uS19c.